The primary structure comprises 946 residues: MAGQVLDGKACAQQFRSNIANEIKSIQGHVPGFAPNLAIIQVGNRPDSATYVRMKRKAAEEAGIVANFIHLDESATEFEVLRYVDQLNEDPHTHGIIVQLPLPAHLDEDRITSRVLAEKDVDGFGPTNIGELNKKNGHPFFLPCTPKGIIELLHKANVTIEGSRSVVIGRSDIVGSPVAELLKSLNSTVTITHSKTRDIASYLHDADIVVVAIGQPEFVKGEWFKPRDGTSSDKKTVVIDVGTNYVADPSKKSGFKCVGDVEFNEAIKYVHLITPVPGGVGPMTVAMLMQNTLIAAKRQMEESSKPLQIPPLPLKLLTPVPSDIDISRAQQPKLINQLAQELGIYSHELELYGHYKAKISPKVIERLQTRQNGKYILVSGITPTPLGEGKSTTTMGLVQALTAHLGKPAIANVRQPSLGPTLGVKGGAAGGGYSQVIPMDEFNLHLTGDIHAIGAANNLLAAAIDTRMFHETTQKNDATFYNRLVPRKNGKRKFTPSMQRRLNRLGIQKTNPDDLTPEEINKFARLNIDPDTITIKRVVDINDRMLRQITIGQAPTEKNHTRVTGFDITVASELMAILALSKDLRDMKERIGRVVVAADVNRSPVTVEDVGCTGALTALLRDAIKPNLMQTLEGTPVLVHAGPFANISIGASSVIADRVALKLVGTEPEAKTEAGYVVTEAGFDFTMGGERFFNIKCRSSGLTPNAVVLVATVRALKSHGGAPDVKPGQPLPSAYTEENIEFVEKGAANMCKQIANIKQFGVPVVVAINKFETDTEGEIAAIRKAALEAGAFEAVTSNHWAEGGKGAIDLAKAVIEASNQPVDFHFLYDVNSSVEDKLTTIVQKMYGGAAIDILPEAQRKIDMYKEQGFGNLPICIAKTQYSLSHDATLKGVPTGFTFPIRDVRLSNGAGYLYALAAEIQTIPGLATYAGYMAVEVDDDGEIDGLF.

A methylenetetrahydrofolate dehydrogenase and cyclohydrolase region spans residues 2 to 319 (AGQVLDGKAC…PPLPLKLLTP (318 aa)). Residues 51-55 (YVRMK) and 98-100 (VQL) each bind substrate. An NADP(+)-binding site is contributed by 169–171 (GRS). Phosphoserine is present on Ser-176. Ser-194 serves as a coordination point for NADP(+). 277–281 (PGGVG) is a binding site for substrate. Phosphothreonine is present on Thr-318. The tract at residues 320-946 (VPSDIDISRA…DDDGEIDGLF (627 aa)) is formyltetrahydrofolate synthetase. Ser-322 is subject to Phosphoserine. An ATP-binding site is contributed by 384–391 (TPLGEGKS).

It in the N-terminal section; belongs to the tetrahydrofolate dehydrogenase/cyclohydrolase family. In the C-terminal section; belongs to the formate--tetrahydrofolate ligase family. In terms of assembly, homodimer.

The protein resides in the cytoplasm. It localises to the nucleus. The catalysed reaction is (6R)-5,10-methylene-5,6,7,8-tetrahydrofolate + NADP(+) = (6R)-5,10-methenyltetrahydrofolate + NADPH. It carries out the reaction (6R)-5,10-methenyltetrahydrofolate + H2O = (6R)-10-formyltetrahydrofolate + H(+). It catalyses the reaction (6S)-5,6,7,8-tetrahydrofolate + formate + ATP = (6R)-10-formyltetrahydrofolate + ADP + phosphate. The protein operates within one-carbon metabolism; tetrahydrofolate interconversion. Functionally, cytoplasmic isozyme of C-1-tetrahydrofolate synthase. The trifunctional enzyme catalyzes the interconversion of the one-carbon derivatives of tetrahydrofolate (THF) between different oxidation states by the enzymatic activities 10-formyltetrahydrofolate synthetase, 5,lO-methenyltetrahydrofolate cyclohydrolase, and 5,lO-methylenetetrahydrofolate dehydrogenase. Involved in the generation of one-carbon intermediates in the biosynthesis of the purine bases. The polypeptide is C-1-tetrahydrofolate synthase, cytoplasmic (ADE3) (Saccharomyces cerevisiae (strain ATCC 204508 / S288c) (Baker's yeast)).